The sequence spans 842 residues: Synaptonemal complex protein 2-like (842 aa).

4 disordered regions span residues 451–473 (GSLE…EPEQ), 505–560 (FARD…KQRV), 619–666 (STQK…SSLE), and 715–738 (EDAP…PGSV). Basic and acidic residues-rich tracts occupy residues 458–470 (TEER…KQDE) and 505–525 (FARD…HDLL). Over residues 543–559 (NHKRKSLRTYSQRKKQR) the composition is skewed to basic residues. Basic and acidic residues-rich tracts occupy residues 624–633 (GLEKPERRGS) and 643–655 (RVTD…EPRS).

This sequence belongs to the SYCP2 family. Specifically expressed in oocytes.

The protein resides in the nucleus. The protein localises to the chromosome. It is found in the centromere. Its function is as follows. Oocyte-specific protein that localizes to centromeres at the dictyate stage and regulates the survival of primordial oocytes. The sequence is that of Synaptonemal complex protein 2-like from Mus musculus (Mouse).